Here is a 94-residue protein sequence, read N- to C-terminus: Integration host factor subunit beta (94 aa).

It belongs to the bacterial histone-like protein family. Heterodimer of an alpha and a beta chain.

In terms of biological role, this protein is one of the two subunits of integration host factor, a specific DNA-binding protein that functions in genetic recombination as well as in transcriptional and translational control. This is Integration host factor subunit beta from Photorhabdus laumondii subsp. laumondii (strain DSM 15139 / CIP 105565 / TT01) (Photorhabdus luminescens subsp. laumondii).